A 317-amino-acid chain; its full sequence is Melanocyte-stimulating hormone receptor (317 aa).

The Extracellular portion of the chain corresponds to 1–37 (MPLQGPQRRLLGSLNSTLPATPYLGLTTNQTEPPCLE). Residue N29 is glycosylated (N-linked (GlcNAc...) asparagine). A helical membrane pass occupies residues 38–63 (VSIPDGLFLSLGLVSLVENVLVVTAI). Topologically, residues 64–72 (AKNRNLHSP) are cytoplasmic. Residues 73 to 93 (MYYFICCLAVSDLLVSMSNVL) traverse the membrane as a helical segment. The Extracellular portion of the chain corresponds to 94 to 118 (EMAILLLLEAGVLATQASVLQQLDN). A helical transmembrane segment spans residues 119–140 (IIDVLICGSMVSSLCFLGSIAV). Residues 141–163 (DRYISIFYALRYHSIMMLPRVWR) lie on the Cytoplasmic side of the membrane. Residues 164 to 183 (AIVAIWVVSVLSSTLFIAYY) form a helical membrane-spanning segment. At 184-191 (NHTAVLLC) the chain is on the extracellular side. Residues 192 to 211 (LVTFFVAMLVLMAVLYVHML) traverse the membrane as a helical segment. The Cytoplasmic portion of the chain corresponds to 212 to 240 (ARACQHARGIARLHKRQHPIHQGFGLKGA). The chain crosses the membrane as a helical span at residues 241–266 (ATLTILLGVFFLCWGPFFLHLSLLIL). The Extracellular portion of the chain corresponds to 267–279 (CPQHPTCGCVFKN). The chain crosses the membrane as a helical span at residues 280 to 300 (FKLFLTLILCSAIVDPLIYAF). Topologically, residues 301–317 (RSQELRKTLQEVLLCSW) are cytoplasmic. C315 carries S-palmitoyl cysteine lipidation.

It belongs to the G-protein coupled receptor 1 family. Interacts with MGRN1, but does not undergo MGRN1-mediated ubiquitination; this interaction competes with GNAS-binding and thus inhibits agonist-induced cAMP production. Interacts with OPN3; the interaction results in a decrease in MC1R-mediated cAMP signaling and ultimately a decrease in melanin production in melanocytes.

It is found in the cell membrane. Its function is as follows. Receptor for MSH (alpha, beta and gamma) and ACTH. The activity of this receptor is mediated by G proteins which activate adenylate cyclase. Mediates melanogenesis, the production of eumelanin (black/brown) and phaeomelanin (red/yellow), via regulation of cAMP signaling in melanocytes. This chain is Melanocyte-stimulating hormone receptor (MC1R), found in Equus caballus (Horse).